A 185-amino-acid chain; its full sequence is Elongation factor P (185 aa).

It belongs to the elongation factor P family.

It localises to the cytoplasm. Its pathway is protein biosynthesis; polypeptide chain elongation. In terms of biological role, involved in peptide bond synthesis. Stimulates efficient translation and peptide-bond synthesis on native or reconstituted 70S ribosomes in vitro. Probably functions indirectly by altering the affinity of the ribosome for aminoacyl-tRNA, thus increasing their reactivity as acceptors for peptidyl transferase. The protein is Elongation factor P of Geobacillus sp. (strain WCH70).